Reading from the N-terminus, the 466-residue chain is Probable sensor protein PcoS (466 aa).

Topologically, residues 1-10 (MRFKISLTTR) are cytoplasmic. Residues 11-31 (LSLIFSAVMLTVWWLSSFILI) traverse the membrane as a helical segment. Residues 32 to 171 (STLNDYFDNQ…HTLLMDKLST (140 aa)) are Periplasmic-facing. Residues 172–192 (WLFWFNIGLVFISVFLGWLTT) traverse the membrane as a helical segment. The HAMP domain maps to 193-246 (RIGLKPLREMTSLASSMTVHSLDQRLNPDLAPPEISETMQEFNNMFDRLEGAFR). The Cytoplasmic portion of the chain corresponds to 193–466 (RIGLKPLREM…IVFKVRLLMD (274 aa)). A Histidine kinase domain is found at 254–466 (DIAHELRTPV…IVFKVRLLMD (213 aa)). His-257 carries the phosphohistidine; by autocatalysis modification.

The protein resides in the cell inner membrane. It catalyses the reaction ATP + protein L-histidine = ADP + protein N-phospho-L-histidine.. Functionally, probable member of a two-component regulatory system PcoS/PcoR. May activate PcoR by phosphorylation. This Escherichia coli protein is Probable sensor protein PcoS (pcoS).